A 201-amino-acid chain; its full sequence is Recombination protein RecR (201 aa).

The C4-type zinc-finger motif lies at 57 to 72 (CADCRTFTEQEVCNIC). Residues 81 to 176 (GQICVVESPA…EASRIAHGVP (96 aa)) form the Toprim domain.

This sequence belongs to the RecR family.

In terms of biological role, may play a role in DNA repair. It seems to be involved in an RecBC-independent recombinational process of DNA repair. It may act with RecF and RecO. This is Recombination protein RecR from Salmonella arizonae (strain ATCC BAA-731 / CDC346-86 / RSK2980).